A 1012-amino-acid polypeptide reads, in one-letter code: RNA-binding protein 26 (1012 aa).

Lys-94 is covalently cross-linked (Glycyl lysine isopeptide (Lys-Gly) (interchain with G-Cter in SUMO2)). Residues 98–127 (LQHQEKDIKKEELTKEEEREKKFSRRLNHS) are a coiled coil. A Glycyl lysine isopeptide (Lys-Gly) (interchain with G-Cter in SUMO1); alternate cross-link involves residue Lys-106. A Glycyl lysine isopeptide (Lys-Gly) (interchain with G-Cter in SUMO2); alternate cross-link involves residue Lys-106. Residues 106-118 (KKEELTKEEEREK) are compositionally biased toward basic and acidic residues. Positions 106–236 (KKEELTKEEE…PLENNYTPVS (131 aa)) are disordered. Ser-127 bears the Phosphoserine mark. Residues 134-168 (RYRDNRSRDERKKDDRSRKRDYDRNPPRRDSYRDR) show a composition bias toward basic and acidic residues. The segment covering 169-186 (YNRRRGRSRSYSRSRSRS) has biased composition (basic residues). 2 stretches are compositionally biased toward basic and acidic residues: residues 187 to 201 (WSKE…DRSR) and 209 to 227 (RSRE…RTDP). The C3H1-type zinc finger occupies 288-316 (PMPKKRCRDYDEKGFCMRGDMCPFDHGSD). Residues 334 to 388 (QPPVVEGPPPPGLPPPPPILTPPPVNLRPPVPPPGPLPPSLPPVTGPPPPLPPLQ) are compositionally biased toward pro residues. 2 disordered regions span residues 334 to 404 (QPPV…SSVP) and 465 to 520 (IGLT…NFNR). The segment covering 394–404 (APPNSATSSVP) has biased composition (low complexity). Residue Ser-501 is modified to Phosphoserine. Residue Lys-515 is modified to N6-acetyllysine. Ser-523 is modified (phosphoserine). The 75-residue stretch at 537–611 (TKLELRKVPP…RFIKVYWHRE (75 aa)) folds into the RRM 1 domain. Ser-621 is subject to Phosphoserine. The segment at 647–667 (PVPSATTEPAEAQSATSELPQ) is disordered. 2 coiled-coil regions span residues 724-800 (DNNE…KSTS) and 828-852 (KKMQ…EAAK). The disordered stretch occupies residues 858 to 889 (SGRGRGIHTRGRGTAHGRGRGRGRGRGVPGHA). Over residues 862–882 (RGIHTRGRGTAHGRGRGRGRG) the composition is skewed to basic residues. Positions 896–965 (RALEISAFTE…QDLKLAWNKP (70 aa)) constitute an RRM 2 domain. Positions 970–1012 (SAVDTEEAEPDEEEFQEESLVDDSLLQDDDEEEEDNESRSWRR) are disordered. The span at 973–1005 (DTEEAEPDEEEFQEESLVDDSLLQDDDEEEEDN) shows a compositional bias: acidic residues.

As to expression, expressed in testis and ovary.

In terms of biological role, may be involved in the turnover of nuclear polyadenylated (pA+) RNA. The protein is RNA-binding protein 26 of Mus musculus (Mouse).